The primary structure comprises 153 residues: Superoxide dismutase [Cu-Zn] (153 aa).

His-45, His-47, and His-62 together coordinate Cu cation. Cys-56 and Cys-145 form a disulfide bridge. Zn(2+) is bound by residues His-62, His-70, His-79, and Asp-82. His-119 provides a ligand contact to Cu cation.

Belongs to the Cu-Zn superoxide dismutase family. Homodimer. Cu cation serves as cofactor. It depends on Zn(2+) as a cofactor.

The protein resides in the cytoplasm. It carries out the reaction 2 superoxide + 2 H(+) = H2O2 + O2. Destroys radicals which are normally produced within the cells and which are toxic to biological systems. In Drosophila teissieri (Fruit fly), this protein is Superoxide dismutase [Cu-Zn].